A 308-amino-acid polypeptide reads, in one-letter code: Small ribosomal subunit protein uS5c (308 aa).

Residues 1–55 constitute a chloroplast transit peptide; sequence MATTATTTPSATSLTTLHRRIPLFPTTTTLLSLSSSSKPLFLSLSSTRSFPTHLY. Residues 152-215 enclose the S5 DRBM domain; the sequence is FEENVVQVRR…VDARRNIITV (64 aa).

In terms of assembly, component of the chloroplast small ribosomal subunit (SSU). Mature 70S chloroplast ribosomes of higher plants consist of a small (30S) and a large (50S) subunit. The 30S small subunit contains 1 molecule of ribosomal RNA (16S rRNA) and 24 different proteins. The 50S large subunit contains 3 rRNA molecules (23S, 5S and 4.5S rRNA) and 33 different proteins. uS5c binds directly to 16S ribosomal RNA.

The protein resides in the plastid. The protein localises to the chloroplast. Component of the chloroplast ribosome (chloro-ribosome), a dedicated translation machinery responsible for the synthesis of chloroplast genome-encoded proteins, including proteins of the transcription and translation machinery and components of the photosynthetic apparatus. The polypeptide is Small ribosomal subunit protein uS5c (rps5) (Spinacia oleracea (Spinach)).